A 717-amino-acid chain; its full sequence is DNA ligase (717 aa).

NAD(+) contacts are provided by residues 44–48 (DAEYD), 93–94 (SL), and Glu-127. Lys-129 serves as the catalytic N6-AMP-lysine intermediate. NAD(+) contacts are provided by Arg-150, Glu-186, Lys-302, and Lys-326. Zn(2+) contacts are provided by Cys-431, Cys-434, Cys-455, and Cys-461. One can recognise a BRCT domain in the interval 639–717 (TSGSPVVGKT…EDEWLELIGG (79 aa)).

It belongs to the NAD-dependent DNA ligase family. LigA subfamily. It depends on Mg(2+) as a cofactor. The cofactor is Mn(2+).

The catalysed reaction is NAD(+) + (deoxyribonucleotide)n-3'-hydroxyl + 5'-phospho-(deoxyribonucleotide)m = (deoxyribonucleotide)n+m + AMP + beta-nicotinamide D-nucleotide.. Its function is as follows. DNA ligase that catalyzes the formation of phosphodiester linkages between 5'-phosphoryl and 3'-hydroxyl groups in double-stranded DNA using NAD as a coenzyme and as the energy source for the reaction. It is essential for DNA replication and repair of damaged DNA. This chain is DNA ligase, found in Rhizobium rhizogenes (strain K84 / ATCC BAA-868) (Agrobacterium radiobacter).